The chain runs to 611 residues: Podocan (611 aa).

The signal sequence occupies residues 1–23 (MAGSRGLPLLLLVLQLFLGPVLP). The LRRNT domain occupies 60–97 (PEPGPATVDCPRDCACSQEGVVDCGGIDLREFPGDLPE). LRR repeat units follow at residues 98-119 (HTNH…ELSR), 122-145 (RLET…AFEH), 148-169 (SLNY…LPNA), 170-190 (LISV…TFGQ), and 193-213 (NLRS…PDHM). N-linked (GlcNAc...) asparagine glycosylation is present at asparagine 215. LRR repeat units lie at residues 219-239 (NVEI…HLPP), 240-261 (ALYK…AFSE), 264-284 (NLRE…DNET), 290-311 (SLEY…LPRS), 312-332 (LVLL…VLTP), 335-358 (NLEY…AFQG), 361-382 (KLHT…LPRR), 383-403 (VRTL…DFAT), 406-427 (FLEE…RDAF), 432-453 (LLRS…LPKN), 477-490 (QLRE…RLRS), 503-523 (GLQL…GLPP), 524-545 (SLEY…AFDS), 548-569 (NLKG…ESAF), and 574-583 (HLQVLDIEGN). Asparagine 282 carries N-linked (GlcNAc...) asparagine glycosylation. The N-linked (GlcNAc...) asparagine glycan is linked to asparagine 411. The tract at residues 585-611 (EFGNGSKDKDEEEEEEEEEEDEEEETR) is disordered. Residues 594–611 (DEEEEEEEEEEDEEEETR) are compositionally biased toward acidic residues.

It belongs to the small leucine-rich proteoglycan (SLRP) family. SLRP class V subfamily. Binds to type I collagen. Post-translationally, N-glycosylated. Kidney. Expressed in podocytes and likely vascular endothelial cells within the glomerulus.

The protein localises to the secreted. It localises to the extracellular space. Its subcellular location is the extracellular matrix. Its function is as follows. Negatively regulates cell proliferation and cell migration, especially in smooth muscle cells. The polypeptide is Podocan (Podn) (Mus musculus (Mouse)).